The sequence spans 332 residues: NADH-quinone oxidoreductase subunit H (332 aa).

9 helical membrane-spanning segments follow: residues 8–28 (IIEC…LAGF), 44–66 (IGPN…KLFA), 78–98 (PIFI…MAPI), 120–140 (VGIL…LLAG), 157–177 (IQFL…LMII), 196–216 (WLIF…YVEL), 245–265 (MFFI…SLVF), 274–294 (FIPG…LFMW), and 312–332 (WKIM…ILLF).

Belongs to the complex I subunit 1 family. In terms of assembly, NDH-1 is composed of 14 different subunits. Subunits NuoA, H, J, K, L, M, N constitute the membrane sector of the complex.

The protein resides in the cell inner membrane. The enzyme catalyses a quinone + NADH + 5 H(+)(in) = a quinol + NAD(+) + 4 H(+)(out). NDH-1 shuttles electrons from NADH, via FMN and iron-sulfur (Fe-S) centers, to quinones in the respiratory chain. The immediate electron acceptor for the enzyme in this species is believed to be ubiquinone. Couples the redox reaction to proton translocation (for every two electrons transferred, four hydrogen ions are translocated across the cytoplasmic membrane), and thus conserves the redox energy in a proton gradient. This subunit may bind ubiquinone. This Helicobacter hepaticus (strain ATCC 51449 / 3B1) protein is NADH-quinone oxidoreductase subunit H.